The chain runs to 337 residues: RNA 3'-terminal phosphate cyclase (337 aa).

ATP contacts are provided by residues Q100 and 281-285; that span reads YMGDQ. Residue H306 is the Tele-AMP-histidine intermediate of the active site.

Belongs to the RNA 3'-terminal cyclase family. Type 1 subfamily.

It is found in the cytoplasm. The catalysed reaction is a 3'-end 3'-phospho-ribonucleotide-RNA + ATP = a 3'-end 2',3'-cyclophospho-ribonucleotide-RNA + AMP + diphosphate. Its function is as follows. Catalyzes the conversion of 3'-phosphate to a 2',3'-cyclic phosphodiester at the end of RNA. The mechanism of action of the enzyme occurs in 3 steps: (A) adenylation of the enzyme by ATP; (B) transfer of adenylate to an RNA-N3'P to produce RNA-N3'PP5'A; (C) and attack of the adjacent 2'-hydroxyl on the 3'-phosphorus in the diester linkage to produce the cyclic end product. The biological role of this enzyme is unknown but it is likely to function in some aspects of cellular RNA processing. In Methanothermobacter thermautotrophicus (strain ATCC 29096 / DSM 1053 / JCM 10044 / NBRC 100330 / Delta H) (Methanobacterium thermoautotrophicum), this protein is RNA 3'-terminal phosphate cyclase (rtcA).